A 475-amino-acid polypeptide reads, in one-letter code: Ribulose bisphosphate carboxylase large chain (475 aa).

Residues 1-2 (MS) constitute a propeptide that is removed on maturation. Pro-3 bears the N-acetylproline mark. Lys-14 carries the post-translational modification N6,N6,N6-trimethyllysine. Substrate contacts are provided by Asn-123 and Thr-173. Lys-175 functions as the Proton acceptor in the catalytic mechanism. Lys-177 lines the substrate pocket. Mg(2+)-binding residues include Lys-201, Asp-203, and Glu-204. Position 201 is an N6-carboxylysine (Lys-201). Residue His-294 is the Proton acceptor of the active site. 3 residues coordinate substrate: Arg-295, His-327, and Ser-379.

The protein belongs to the RuBisCO large chain family. Type I subfamily. Heterohexadecamer of 8 large chains and 8 small chains; disulfide-linked. The disulfide link is formed within the large subunit homodimers. Mg(2+) serves as cofactor. The disulfide bond which can form in the large chain dimeric partners within the hexadecamer appears to be associated with oxidative stress and protein turnover.

It is found in the plastid. Its subcellular location is the chloroplast. It carries out the reaction 2 (2R)-3-phosphoglycerate + 2 H(+) = D-ribulose 1,5-bisphosphate + CO2 + H2O. The enzyme catalyses D-ribulose 1,5-bisphosphate + O2 = 2-phosphoglycolate + (2R)-3-phosphoglycerate + 2 H(+). RuBisCO catalyzes two reactions: the carboxylation of D-ribulose 1,5-bisphosphate, the primary event in carbon dioxide fixation, as well as the oxidative fragmentation of the pentose substrate in the photorespiration process. Both reactions occur simultaneously and in competition at the same active site. The sequence is that of Ribulose bisphosphate carboxylase large chain from Betula papyrifera (Paper birch).